We begin with the raw amino-acid sequence, 115 residues long: Ribonuclease P protein component (115 aa).

The protein belongs to the RnpA family. As to quaternary structure, consists of a catalytic RNA component (M1 or rnpB) and a protein subunit.

The catalysed reaction is Endonucleolytic cleavage of RNA, removing 5'-extranucleotides from tRNA precursor.. In terms of biological role, RNaseP catalyzes the removal of the 5'-leader sequence from pre-tRNA to produce the mature 5'-terminus. It can also cleave other RNA substrates such as 4.5S RNA. The protein component plays an auxiliary but essential role in vivo by binding to the 5'-leader sequence and broadening the substrate specificity of the ribozyme. This chain is Ribonuclease P protein component, found in Bacillus cereus (strain G9842).